Reading from the N-terminus, the 356-residue chain is sn-glycerol-3-phosphate import ATP-binding protein UgpC (356 aa).

Positions 4–235 constitute an ABC transporter domain; it reads LKLQAVTKSW…PASRFVASFI (232 aa). 37-44 contacts ATP; that stretch reads GPSGCGKS.

Belongs to the ABC transporter superfamily. sn-glycerol-3-phosphate importer (TC 3.A.1.1.3) family. In terms of assembly, the complex is composed of two ATP-binding proteins (UgpC), two transmembrane proteins (UgpA and UgpE) and a solute-binding protein (UgpB).

Its subcellular location is the cell inner membrane. The enzyme catalyses sn-glycerol 3-phosphate(out) + ATP + H2O = sn-glycerol 3-phosphate(in) + ADP + phosphate + H(+). Its function is as follows. Part of the ABC transporter complex UgpBAEC involved in sn-glycerol-3-phosphate (G3P) import. Responsible for energy coupling to the transport system. This Salmonella typhimurium (strain LT2 / SGSC1412 / ATCC 700720) protein is sn-glycerol-3-phosphate import ATP-binding protein UgpC.